A 121-amino-acid polypeptide reads, in one-letter code: Large ribosomal subunit protein uL24 (121 aa).

Belongs to the universal ribosomal protein uL24 family. In terms of assembly, part of the 50S ribosomal subunit.

One of two assembly initiator proteins, it binds directly to the 5'-end of the 23S rRNA, where it nucleates assembly of the 50S subunit. In terms of biological role, located at the polypeptide exit tunnel on the outside of the subunit. This Methanocorpusculum labreanum (strain ATCC 43576 / DSM 4855 / Z) protein is Large ribosomal subunit protein uL24.